The following is a 381-amino-acid chain: Alkanesulfonate monooxygenase (381 aa).

Belongs to the SsuD family. As to quaternary structure, homotetramer.

It carries out the reaction an alkanesulfonate + FMNH2 + O2 = an aldehyde + FMN + sulfite + H2O + 2 H(+). Its function is as follows. Catalyzes the desulfonation of aliphatic sulfonates. This Shigella flexneri protein is Alkanesulfonate monooxygenase.